A 232-amino-acid polypeptide reads, in one-letter code: MTKHGKRIRGIQETYDLAKSYSLGEAIDILKQCPTVRFDQTVDVSVKLGIDPRKSDQQIRGSVSLPHGTGKVLRILVFAAGDKAAEAIEAGADFVGSDDLVEKIKGGWVDFDVAVATPDMMREVGKLGKVLGPRNLMPTPKAGTVTTDVVKTVAELRKGKIEFKADRAGVCNVGVAKLSFDSAQIKENVEALCAALVKAKPATAKGQYLVNFTISSTMGPGVTVDTRELIAL.

It belongs to the universal ribosomal protein uL1 family. In terms of assembly, part of the 50S ribosomal subunit.

Functionally, binds directly to 23S rRNA. The L1 stalk is quite mobile in the ribosome, and is involved in E site tRNA release. In terms of biological role, protein L1 is also a translational repressor protein, it controls the translation of the L11 operon by binding to its mRNA. This Chlamydia trachomatis serovar D (strain ATCC VR-885 / DSM 19411 / UW-3/Cx) protein is Large ribosomal subunit protein uL1.